The following is a 151-amino-acid chain: Nucleoside diphosphate kinase (151 aa).

ATP contacts are provided by Lys-10, Phe-58, Arg-86, Thr-92, Arg-103, and Asn-113. Catalysis depends on His-116, which acts as the Pros-phosphohistidine intermediate.

It belongs to the NDK family. Homotetramer. Mg(2+) is required as a cofactor.

It is found in the cytoplasm. The catalysed reaction is dZDP + ATP = dZTP + ADP. It catalyses the reaction a 2'-deoxyribonucleoside 5'-diphosphate + ATP = a 2'-deoxyribonucleoside 5'-triphosphate + ADP. It carries out the reaction a ribonucleoside 5'-diphosphate + ATP = a ribonucleoside 5'-triphosphate + ADP. It functions in the pathway purine metabolism. Major role in the synthesis of nucleoside triphosphates other than ATP. The ATP gamma phosphate is transferred to the NDP beta phosphate via a ping-pong mechanism, using a phosphorylated active-site intermediate. In terms of biological role, (Microbial infection) Catalyzes the phosphorylation of dZDP to dZTP, when the bacterium is infected by a phage that produces the substrate for the synthesis of dZTP (2- amino-2'-deoxyadenosine 5'-triphosphate), which is then used by the phage as a DNA polymerase substrate. This Synechococcus sp. (strain CC9902) protein is Nucleoside diphosphate kinase.